Here is a 339-residue protein sequence, read N- to C-terminus: Annexin A2 (339 aa).

An N-acetylserine modification is found at Ser2. The interval 2–24 (STVHEILSKLSLEGDHSLPPSAY) is S100A10-binding site. Residue Tyr24 is modified to Phosphotyrosine; by SRC. Residue Thr26 is modified to Phosphothreonine; by PKC. Annexin repeat units follow at residues 33–104 (FDAD…GLLK), 105–176 (TPSQ…ALAK), 189–261 (ELID…NLVQ), and 265–336 (NKQL…NLCG).

This sequence belongs to the annexin family. In terms of assembly, heterotetramer containing 2 light chains of S100A10/p11 and 2 heavy chains of ANXA2/p36.

The protein resides in the secreted. It is found in the extracellular space. Its subcellular location is the extracellular matrix. The protein localises to the basement membrane. In terms of biological role, calcium-regulated membrane-binding protein whose affinity for calcium is greatly enhanced by anionic phospholipids. It binds two calcium ions with high affinity. This chain is Annexin A2 (ANXA2), found in Gallus gallus (Chicken).